The following is a 520-amino-acid chain: Probable methylmalonate-semialdehyde/malonate-semialdehyde dehydrogenase [acylating], mitochondrial (520 aa).

Residues Ala-169, Phe-171, Lys-195, Glu-198, Arg-199, and Ser-248 each contribute to the NAD(+) site. Cys-303 functions as the Nucleophile in the catalytic mechanism. Residue Glu-403 coordinates NAD(+).

Belongs to the aldehyde dehydrogenase family. Homotetramer.

The protein resides in the mitochondrion. The enzyme catalyses 2-methyl-3-oxopropanoate + NAD(+) + CoA + H2O = propanoyl-CoA + hydrogencarbonate + NADH + H(+). It catalyses the reaction 3-oxopropanoate + NAD(+) + CoA + H2O = hydrogencarbonate + acetyl-CoA + NADH + H(+). Functionally, probable malonate and methylmalonate semialdehyde dehydrogenase involved in the catabolism of valine, thymine, and compounds catabolized by way of beta-alanine, including uracil and cytidine. The sequence is that of Probable methylmalonate-semialdehyde/malonate-semialdehyde dehydrogenase [acylating], mitochondrial from Drosophila pseudoobscura pseudoobscura (Fruit fly).